The primary structure comprises 518 residues: MAGLRNESEQEPLLGDTPGSREWDILETEEHYKSRWRSIRILYLTMFLSSVGFSVVMMSIWPYLQKIDPTADTSFLGWVIASYSLGQMVASPIFGLWSNYRPRKEPLIVSILISVAANCLYAYLHIPASHNKYYMLVARGLLGIGAGNVAVVRSYTAGATSLQERTSSMANISMCQALGFILGPVFQTCFTFLGEKGVTWDVIKLQINMYTTPVLLSAFLGILNIILILAILREHRVDDSGRQCKSINFEEASTDEAQVPQGNIDQVAVVAINVLFFVTLFIFALFETIITPLTMDMYAWTQEQAVLYNGIILAALGVEAVVIFLGVKLLSKKIGERAILLGGLIVVWVGFFILLPWGNQFPKIQWEDLHNNSIPNTTFGEIIIGLWKSPMEDDNERPTGCSIEQAWCLYTPVIHLAQFLTSAVLIGLGYPVCNLMSYTLYSKILGPKPQGVYMGWLTASGSGARILGPMFISQVYAHWGPRWAFSLVCGIIVLTITLLGVVYKRLIALSVRYGRIQE.

A disordered region spans residues 1 to 20 (MAGLRNESEQEPLLGDTPGS). Residues 1 to 40 (MAGLRNESEQEPLLGDTPGSREWDILETEEHYKSRWRSIR) lie on the Cytoplasmic side of the membrane. The short motif at 13–14 (LL) is the Dileucine internalization motif element. The chain crosses the membrane as a helical span at residues 41 to 61 (ILYLTMFLSSVGFSVVMMSIW). The Extracellular segment spans residues 62-74 (PYLQKIDPTADTS). Residues 75–95 (FLGWVIASYSLGQMVASPIFG) traverse the membrane as a helical segment. Topologically, residues 96-105 (LWSNYRPRKE) are cytoplasmic. The chain crosses the membrane as a helical span at residues 106 to 126 (PLIVSILISVAANCLYAYLHI). Topologically, residues 127 to 131 (PASHN) are extracellular. A helical transmembrane segment spans residues 132-152 (KYYMLVARGLLGIGAGNVAVV). The Cytoplasmic segment spans residues 153 to 173 (RSYTAGATSLQERTSSMANIS). A helical membrane pass occupies residues 174 to 194 (MCQALGFILGPVFQTCFTFLG). Topologically, residues 195–211 (EKGVTWDVIKLQINMYT) are extracellular. A helical transmembrane segment spans residues 212 to 232 (TPVLLSAFLGILNIILILAIL). The Cytoplasmic portion of the chain corresponds to 233–266 (REHRVDDSGRQCKSINFEEASTDEAQVPQGNIDQ). The chain crosses the membrane as a helical span at residues 267-287 (VAVVAINVLFFVTLFIFALFE). Topologically, residues 288–304 (TIITPLTMDMYAWTQEQ) are extracellular. Residues 305 to 325 (AVLYNGIILAALGVEAVVIFL) traverse the membrane as a helical segment. Topologically, residues 326-337 (GVKLLSKKIGER) are cytoplasmic. The helical transmembrane segment at 338-358 (AILLGGLIVVWVGFFILLPWG) threads the bilayer. Residues 359 to 412 (NQFPKIQWEDLHNNSIPNTTFGEIIIGLWKSPMEDDNERPTGCSIEQAWCLYTP) are Extracellular-facing. N-linked (GlcNAc...) asparagine glycosylation is found at Asn371 and Asn376. The chain crosses the membrane as a helical span at residues 413 to 433 (VIHLAQFLTSAVLIGLGYPVC). Over 434-451 (NLMSYTLYSKILGPKPQG) the chain is Cytoplasmic. Residues 452-472 (VYMGWLTASGSGARILGPMFI) form a helical membrane-spanning segment. Residues 473–482 (SQVYAHWGPR) are Extracellular-facing. Residues 483 to 503 (WAFSLVCGIIVLTITLLGVVY) traverse the membrane as a helical segment. The Cytoplasmic segment spans residues 504–518 (KRLIALSVRYGRIQE).

It belongs to the major facilitator superfamily. In terms of tissue distribution, expressed at very low levels in all tissues tested.

Its subcellular location is the endosome membrane. It localises to the lysosome membrane. It carries out the reaction chloride(in) = chloride(out). It catalyses the reaction iodide(out) = iodide(in). The enzyme catalyses fluoride(in) = fluoride(out). Inhibited by chloride channel blockers 4,4'-diisothiocyano-2,2'-stilbenedisulfonate (DIDS), niflumic acid (NFA), and 5-Nitro-2-(3-phenylpropylamino) benzoic acid (NPPB). In terms of biological role, outward-rectifying chloride channel involved in endolysosomal chloride homeostasis, membrane fusion and function. Conducts chloride currents up to hundreds of picoamperes. Regulates lysosomal calcium content by reducing the lysosomal membrane potential, thereby activating TRPML1 channel and further release of lysosomal calcium ions. Regulates the pH in endolysosomal compartments and may contribute to progressive acidification from endosome to lysosome. Permeable to other halides such as iodide and fluoride ions. In Homo sapiens (Human), this protein is Major facilitator superfamily domain-containing protein 8.